Reading from the N-terminus, the 79-residue chain is Putative defensin-like protein 274 (79 aa).

The first 23 residues, 1–23 (MASSRFQLVALLVVFSLVISITA), serve as a signal peptide directing secretion. 4 disulfide bridges follow: Cys35/Cys76, Cys41/Cys64, Cys47/Cys74, and Cys51/Cys75.

Belongs to the DEFL family.

It localises to the secreted. This is Putative defensin-like protein 274 from Arabidopsis thaliana (Mouse-ear cress).